The primary structure comprises 126 residues: DNA-directed RNA polymerase 35 kDa subunit (126 aa).

It belongs to the poxviridae DNA-directed RNA polymerase 35 kDa subunit family. As to quaternary structure, the DNA-dependent RNA polymerase used for intermediate and late genes expression consists of eight subunits 147 kDa, 133 kDa, 35 kDa, 30 kDa, 22 kDa, 19 kDa, 18 kDa and 7 kDa totalling more than 500 kDa in mass. The same holoenzyme, with the addition of the transcription-specificity factor RAP94, is used for early gene expression.

The protein localises to the virion. It carries out the reaction RNA(n) + a ribonucleoside 5'-triphosphate = RNA(n+1) + diphosphate. Functionally, part of the DNA-dependent RNA polymerase which catalyzes the transcription of viral DNA into RNA using the four ribonucleoside triphosphates as substrates. Responsible for the transcription of early, intermediate and late genes. DNA-dependent RNA polymerase associates with the early transcription factor (ETF) thereby allowing the early genes transcription. Late transcription, and probably also intermediate transcription, require newly synthesized RNA polymerase. In Ovis aries (Sheep), this protein is DNA-directed RNA polymerase 35 kDa subunit (RPO35).